The primary structure comprises 251 residues: ATP synthase subunit a (251 aa).

The next 5 helical transmembrane spans lie at 34–54 (VFLTSWFVIGVLVLASVAASS), 93–113 (FVGTLFLFIFVSNWSGALVPF), 130–150 (INTTVALALLTSLAYFYAGFS), 195–215 (LVVGVLVLLVPLFVPLPVMAL), and 216–236 (GLFTSAIQALIFATLAAAYIG).

This sequence belongs to the ATPase A chain family. F-type ATPases have 2 components, CF(1) - the catalytic core - and CF(0) - the membrane proton channel. CF(1) has five subunits: alpha(3), beta(3), gamma(1), delta(1), epsilon(1). CF(0) has four main subunits: a, b, b' and c.

It is found in the cellular thylakoid membrane. Functionally, key component of the proton channel; it plays a direct role in the translocation of protons across the membrane. In Nostoc sp. (strain PCC 7120 / SAG 25.82 / UTEX 2576), this protein is ATP synthase subunit a.